A 1224-amino-acid chain; its full sequence is DNA-directed RNA polymerase subunit beta' (1224 aa).

Residues C60, C62, C75, and C78 each coordinate Zn(2+). Residues D449, D451, and D453 each coordinate Mg(2+). The Zn(2+) site is built by C819, C893, C900, and C903.

Belongs to the RNA polymerase beta' chain family. In terms of assembly, the RNAP catalytic core consists of 2 alpha, 1 beta, 1 beta' and 1 omega subunit. When a sigma factor is associated with the core the holoenzyme is formed, which can initiate transcription. Requires Mg(2+) as cofactor. Zn(2+) serves as cofactor.

The enzyme catalyses RNA(n) + a ribonucleoside 5'-triphosphate = RNA(n+1) + diphosphate. In terms of biological role, DNA-dependent RNA polymerase catalyzes the transcription of DNA into RNA using the four ribonucleoside triphosphates as substrates. The sequence is that of DNA-directed RNA polymerase subunit beta' from Lactobacillus johnsonii (strain CNCM I-12250 / La1 / NCC 533).